A 297-amino-acid chain; its full sequence is Acetylglutamate kinase (297 aa).

Residues Gly64–Gly65, Arg86, and Asn190 contribute to the substrate site.

The protein belongs to the acetylglutamate kinase family. ArgB subfamily.

It localises to the cytoplasm. The catalysed reaction is N-acetyl-L-glutamate + ATP = N-acetyl-L-glutamyl 5-phosphate + ADP. Its pathway is amino-acid biosynthesis; L-arginine biosynthesis; N(2)-acetyl-L-ornithine from L-glutamate: step 2/4. Catalyzes the ATP-dependent phosphorylation of N-acetyl-L-glutamate. The sequence is that of Acetylglutamate kinase from Solidesulfovibrio magneticus (strain ATCC 700980 / DSM 13731 / RS-1) (Desulfovibrio magneticus).